The chain runs to 205 residues: High frequency lysogenization protein HflD homolog (205 aa).

The protein belongs to the HflD family.

The protein resides in the cytoplasm. The protein localises to the cell inner membrane. This chain is High frequency lysogenization protein HflD homolog, found in Aliivibrio fischeri (strain ATCC 700601 / ES114) (Vibrio fischeri).